The chain runs to 129 residues: UPF0102 protein RD1_1191 (129 aa).

This sequence belongs to the UPF0102 family.

The sequence is that of UPF0102 protein RD1_1191 from Roseobacter denitrificans (strain ATCC 33942 / OCh 114) (Erythrobacter sp. (strain OCh 114)).